Reading from the N-terminus, the 239-residue chain is Octanoyltransferase (239 aa).

A BPL/LPL catalytic domain is found at 59-239 (PFSPQAVWLL…KRRFKLNWEK (181 aa)). Substrate-binding positions include 101–108 (RGGEVTHH), 168–170 (SIG), and 181–183 (GFS). The Acyl-thioester intermediate role is filled by cysteine 199.

The protein belongs to the LipB family.

The protein localises to the cytoplasm. It carries out the reaction octanoyl-[ACP] + L-lysyl-[protein] = N(6)-octanoyl-L-lysyl-[protein] + holo-[ACP] + H(+). The protein operates within protein modification; protein lipoylation via endogenous pathway; protein N(6)-(lipoyl)lysine from octanoyl-[acyl-carrier-protein]: step 1/2. Functionally, catalyzes the transfer of endogenously produced octanoic acid from octanoyl-acyl-carrier-protein onto the lipoyl domains of lipoate-dependent enzymes. Lipoyl-ACP can also act as a substrate although octanoyl-ACP is likely to be the physiological substrate. The sequence is that of Octanoyltransferase from Prochlorococcus marinus (strain NATL2A).